The chain runs to 1007 residues: A disintegrin and metalloproteinase with thrombospondin motifs 1 (1007 aa).

A signal peptide spans Met-1–Ala-20. Asn-130 and Asn-228 each carry an N-linked (GlcNAc...) asparagine glycan. The Peptidase M12B domain occupies Leu-184–His-370. Zn(2+) is bound at residue His-322. The short motif at His-322–Asp-333 is the Metal-binding element. The active site involves Glu-323. The Zn(2+) site is built by His-326 and His-332. Disulfide bonds link Cys-338–Cys-364, Cys-494–Cys-530, Cys-498–Cys-536, and Cys-509–Cys-520. Residues Thr-482–Ala-537 form the TSP type-1 1 domain. N-linked (GlcNAc...) asparagine glycans are attached at residues Asn-561, Asn-610, Asn-626, Asn-737, Asn-777, and Asn-865. 2 TSP type-1 domains span residues Cys-833 to Pro-899 and Cys-900 to Pro-952. Disulfide bonds link Cys-912–Cys-946, Cys-916–Cys-951, and Cys-927–Cys-935.

Zn(2+) is required as a cofactor.

Its subcellular location is the secreted. The protein resides in the extracellular space. It localises to the extracellular matrix. Involved in larval molting and metamorphosis. May degrade extracellular matrix (ECM) and basement membrane (BM) during the development of organs to allow degeneration and remodeling of tissues. The polypeptide is A disintegrin and metalloproteinase with thrombospondin motifs 1 (Bombyx mori (Silk moth)).